A 977-amino-acid polypeptide reads, in one-letter code: Glutamate receptor 2 (977 aa).

The N-terminal stretch at 1–19 is a signal peptide; the sequence is MNKNLLVFGFLIFVKIGET. Over 20 to 621 the chain is Extracellular; the sequence is SKKFPLRAFV…FSFMEPLGMT (602 aa). N-linked (GlcNAc...) asparagine glycosylation is found at Asn-36, Asn-227, Asn-291, Asn-427, Asn-532, and Asn-566. A helical transmembrane segment spans residues 622 to 642; it reads IWIFTLSSYFGVSLTIFLVSW. Residues 643–695 are Cytoplasmic-facing; the sequence is FSPYEKRIEFKRGEFTVTNEFTLYNSLWFTLAAFMQQGTDILPRAVSGRIASS. Residues 696 to 716 form a helical membrane-spanning segment; it reads CWWFFTLIIVSSYTANLAAFL. The Extracellular segment spans residues 717–898; it reads TLERMTPPIE…GTSSSLNLSK (182 aa). Residues Asn-783 and Asn-895 are each glycosylated (N-linked (GlcNAc...) asparagine). The helical transmembrane segment at 899-919 threads the bilayer; sequence VAGIFYILLAGMVLSMCTALV. Residues 920-977 are Cytoplasmic-facing; the sequence is EFLFRKNKENREKERNRMRSSRPLKPGILASCERAKQKQLQNRRTKSEEVSTPRSTLF. Residues 954 to 977 form a disordered region; it reads AKQKQLQNRRTKSEEVSTPRSTLF.

This sequence belongs to the glutamate-gated ion channel (TC 1.A.10.1) family. In terms of tissue distribution, command interneurons of the locomotory control circuit (AIA, AIB, AVA, AVD, AVE, PVC, RIA, RIG and RIR) and motor neurons (AVG, M1, RMDD and RMDV).

The protein localises to the membrane. The protein resides in the postsynaptic cell membrane. Functionally, L-glutamate acts as an excitatory neurotransmitter at many synapses in the central nervous system. The postsynaptic actions of glutamate are mediated by a variety of receptors that are named according to their selective agonists. Required for response to mechanical and osmotic stimuli. In Caenorhabditis elegans, this protein is Glutamate receptor 2 (glr-2).